A 208-amino-acid chain; its full sequence is Ribosomal RNA large subunit methyltransferase E (208 aa).

Positions 61, 63, 81, 97, and 122 each coordinate S-adenosyl-L-methionine. K162 acts as the Proton acceptor in catalysis.

The protein belongs to the class I-like SAM-binding methyltransferase superfamily. RNA methyltransferase RlmE family.

The protein resides in the cytoplasm. The enzyme catalyses uridine(2552) in 23S rRNA + S-adenosyl-L-methionine = 2'-O-methyluridine(2552) in 23S rRNA + S-adenosyl-L-homocysteine + H(+). Specifically methylates the uridine in position 2552 of 23S rRNA at the 2'-O position of the ribose in the fully assembled 50S ribosomal subunit. The polypeptide is Ribosomal RNA large subunit methyltransferase E (Pseudomonas putida (strain GB-1)).